Consider the following 427-residue polypeptide: Enolase (427 aa).

Gln162 lines the (2R)-2-phosphoglycerate pocket. Catalysis depends on Glu206, which acts as the Proton donor. Mg(2+) is bound by residues Asp243, Glu286, and Asp313. (2R)-2-phosphoglycerate contacts are provided by Lys338, Arg367, Ser368, and Lys389. The active-site Proton acceptor is Lys338.

This sequence belongs to the enolase family. The cofactor is Mg(2+).

The protein resides in the cytoplasm. It localises to the secreted. The protein localises to the cell surface. The catalysed reaction is (2R)-2-phosphoglycerate = phosphoenolpyruvate + H2O. Its pathway is carbohydrate degradation; glycolysis; pyruvate from D-glyceraldehyde 3-phosphate: step 4/5. Its function is as follows. Catalyzes the reversible conversion of 2-phosphoglycerate (2-PG) into phosphoenolpyruvate (PEP). It is essential for the degradation of carbohydrates via glycolysis. The protein is Enolase of Methanopyrus kandleri (strain AV19 / DSM 6324 / JCM 9639 / NBRC 100938).